The primary structure comprises 99 residues: Aspartyl/glutamyl-tRNA(Asn/Gln) amidotransferase subunit C (99 aa).

Belongs to the GatC family. Heterotrimer of A, B and C subunits.

It catalyses the reaction L-glutamyl-tRNA(Gln) + L-glutamine + ATP + H2O = L-glutaminyl-tRNA(Gln) + L-glutamate + ADP + phosphate + H(+). The enzyme catalyses L-aspartyl-tRNA(Asn) + L-glutamine + ATP + H2O = L-asparaginyl-tRNA(Asn) + L-glutamate + ADP + phosphate + 2 H(+). Allows the formation of correctly charged Asn-tRNA(Asn) or Gln-tRNA(Gln) through the transamidation of misacylated Asp-tRNA(Asn) or Glu-tRNA(Gln) in organisms which lack either or both of asparaginyl-tRNA or glutaminyl-tRNA synthetases. The reaction takes place in the presence of glutamine and ATP through an activated phospho-Asp-tRNA(Asn) or phospho-Glu-tRNA(Gln). This is Aspartyl/glutamyl-tRNA(Asn/Gln) amidotransferase subunit C from Methylibium petroleiphilum (strain ATCC BAA-1232 / LMG 22953 / PM1).